A 595-amino-acid chain; its full sequence is Zinc finger protein 467 (595 aa).

Residues 1–67 form a disordered region; that stretch reads MRETLEALSS…EEGAHTEQAE (67 aa). Lysine 97 participates in a covalent cross-link: Glycyl lysine isopeptide (Lys-Gly) (interchain with G-Cter in SUMO2). C2H2-type zinc fingers lie at residues 160 to 182, 188 to 210, 216 to 238, 244 to 266, 272 to 294, and 300 to 322; these read YGCG…QRLH, CACP…QRSH, FPCS…LRTH, YPCA…QKTH, FPCT…QRIH, and YQCA…QRVH. The disordered stretch occupies residues 313 to 350; it reads QHLVRHQRVHQTAGPARPSPDSSASPHSTAPSPTPSFP. Low complexity predominate over residues 325 to 343; it reads AGPARPSPDSSASPHSTAP. 6 C2H2-type zinc fingers span residues 355-377, 431-453, 459-481, 487-509, 515-537, and 543-565; these read FACS…QCLH, FFCP…PRVH, FACT…SRAH, FACA…QAVH, HACA…QAIH, and FSCP…QLIH. A Glycyl lysine isopeptide (Lys-Gly) (interchain with G-Cter in SUMO2) cross-link involves residue lysine 368.

This sequence belongs to the krueppel C2H2-type zinc-finger protein family. As to quaternary structure, interacts with STAT3. Enhances STAT3 activity by keeping it in the nucleus.

The protein resides in the nucleus. Its function is as follows. Transcription factor that promotes adipocyte differentiation and suppresses osteoblast differentiation in the bone marrow. Enhances the osteoclast-supporting ability of stromal cells. Binds with STAT3 the consensus sequence 5'-CTTCTGGGAAGA-3' of the acute phase response element (APRE). Transactivates several promoters including FOS, OSM and PPARG. Recruits a histone deacetylase complex. The sequence is that of Zinc finger protein 467 (ZNF467) from Homo sapiens (Human).